Consider the following 1094-residue polypeptide: Protein phosphatase 2C and cyclic nucleotide-binding/kinase domain-containing protein (1094 aa).

One can recognise a PPM-type phosphatase domain in the interval 107–397; sequence RCSFLSQRGY…DDITIIVVHI (291 aa). Asp-148, Gly-149, Asp-344, and Asp-388 together coordinate Mn(2+). Residues 491 to 616 and 617 to 758 contribute to the a nucleoside 3',5'-cyclic phosphate site; these read LFRK…RSVD and LLSR…RHSS. Positions 785 to 1038 constitute a Protein kinase domain; that stretch reads TTCLSTTDCS…PESIKKHPWF (254 aa). ATP-binding positions include 791–799 and Lys-811; that span reads TDCSEIGLV.

In the N-terminal section; belongs to the PP2C family. The protein in the C-terminal section; belongs to the protein kinase superfamily. AGC Ser/Thr protein kinase family. It depends on Mg(2+) as a cofactor. Mn(2+) serves as cofactor.

It carries out the reaction O-phospho-L-seryl-[protein] + H2O = L-seryl-[protein] + phosphate. The enzyme catalyses O-phospho-L-threonyl-[protein] + H2O = L-threonyl-[protein] + phosphate. In Arabidopsis thaliana (Mouse-ear cress), this protein is Protein phosphatase 2C and cyclic nucleotide-binding/kinase domain-containing protein.